A 260-amino-acid chain; its full sequence is 3-methyl-2-oxobutanoate hydroxymethyltransferase (260 aa).

Mg(2+) contacts are provided by Asp44 and Asp83. 3-methyl-2-oxobutanoate contacts are provided by residues 44 to 45 (DS), Asp83, and Lys113. Glu115 contacts Mg(2+). Glu182 acts as the Proton acceptor in catalysis.

This sequence belongs to the PanB family. In terms of assembly, homodecamer; pentamer of dimers. Mg(2+) serves as cofactor.

The protein localises to the cytoplasm. It catalyses the reaction 3-methyl-2-oxobutanoate + (6R)-5,10-methylene-5,6,7,8-tetrahydrofolate + H2O = 2-dehydropantoate + (6S)-5,6,7,8-tetrahydrofolate. Its pathway is cofactor biosynthesis; (R)-pantothenate biosynthesis; (R)-pantoate from 3-methyl-2-oxobutanoate: step 1/2. Catalyzes the reversible reaction in which hydroxymethyl group from 5,10-methylenetetrahydrofolate is transferred onto alpha-ketoisovalerate to form ketopantoate. The sequence is that of 3-methyl-2-oxobutanoate hydroxymethyltransferase from Synechocystis sp. (strain ATCC 27184 / PCC 6803 / Kazusa).